The sequence spans 439 residues: Proline--tRNA ligase (439 aa).

Belongs to the class-II aminoacyl-tRNA synthetase family. ProS type 2 subfamily. In terms of assembly, homodimer.

It is found in the cytoplasm. It catalyses the reaction tRNA(Pro) + L-proline + ATP = L-prolyl-tRNA(Pro) + AMP + diphosphate. Its function is as follows. Catalyzes the attachment of proline to tRNA(Pro) in a two-step reaction: proline is first activated by ATP to form Pro-AMP and then transferred to the acceptor end of tRNA(Pro). The protein is Proline--tRNA ligase of Rhodopseudomonas palustris (strain BisA53).